The following is a 64-amino-acid chain: Disintegrin VLO5A (64 aa).

Residues 1 to 64 form the Disintegrin domain; the sequence is NSGNPCCDPV…SDCPRNPYKD (64 aa). Intrachain disulfides connect C6-C29, C20-C26, C25-C50, and C38-C57. Positions 42-44 match the Cell attachment site; atypical (VGD) motif; sequence VGD.

The protein belongs to the venom metalloproteinase (M12B) family. P-II subfamily. P-IIe sub-subfamily. Heterodimer with VLO5B; disulfide-linked. In terms of tissue distribution, expressed by the venom gland.

Its subcellular location is the secreted. Functionally, poor inhibitor of platelet aggregation. The disintegrin inhibits the adhesion of the alpha-4/beta-1 (ITGA4/ITGB1) integrin to VCAM-1. Inhibition on alpha-IIb/beta-3 (ITGA2B/ITGB3) is low. The chain is Disintegrin VLO5A from Macrovipera lebetina obtusa (Levant blunt-nosed viper).